A 569-amino-acid polypeptide reads, in one-letter code: Urease subunit alpha (569 aa).

The 439-residue stretch at 131–569 folds into the Urease domain; that stretch reads GAIDSHIHFI…LPLAQRYLLL (439 aa). Ni(2+) is bound by residues histidine 136, histidine 138, and lysine 219. N6-carboxylysine is present on lysine 219. Histidine 221 contributes to the substrate binding site. Ni(2+) is bound by residues histidine 248 and histidine 274. Histidine 322 serves as the catalytic Proton donor. Aspartate 362 lines the Ni(2+) pocket.

The protein belongs to the metallo-dependent hydrolases superfamily. Urease alpha subunit family. Heterotrimer of UreA (gamma), UreB (beta) and UreC (alpha) subunits. Three heterotrimers associate to form the active enzyme. The cofactor is Ni cation. Carboxylation allows a single lysine to coordinate two nickel ions.

The protein resides in the cytoplasm. It carries out the reaction urea + 2 H2O + H(+) = hydrogencarbonate + 2 NH4(+). It participates in nitrogen metabolism; urea degradation; CO(2) and NH(3) from urea (urease route): step 1/1. This is Urease subunit alpha from Prochlorococcus marinus (strain NATL2A).